A 210-amino-acid polypeptide reads, in one-letter code: ATP-dependent Clp protease proteolytic subunit (210 aa).

The active-site Nucleophile is S106. Residue H131 is part of the active site.

The protein belongs to the peptidase S14 family. Fourteen ClpP subunits assemble into 2 heptameric rings which stack back to back to give a disk-like structure with a central cavity, resembling the structure of eukaryotic proteasomes.

The protein resides in the cytoplasm. The catalysed reaction is Hydrolysis of proteins to small peptides in the presence of ATP and magnesium. alpha-casein is the usual test substrate. In the absence of ATP, only oligopeptides shorter than five residues are hydrolyzed (such as succinyl-Leu-Tyr-|-NHMec, and Leu-Tyr-Leu-|-Tyr-Trp, in which cleavage of the -Tyr-|-Leu- and -Tyr-|-Trp bonds also occurs).. Cleaves peptides in various proteins in a process that requires ATP hydrolysis. Has a chymotrypsin-like activity. Plays a major role in the degradation of misfolded proteins. The chain is ATP-dependent Clp protease proteolytic subunit from Bartonella henselae (strain ATCC 49882 / DSM 28221 / CCUG 30454 / Houston 1) (Rochalimaea henselae).